The chain runs to 515 residues: Integrator complex subunit 14 (515 aa).

Positions 2–204 (PTVVVMDVSL…KNVQSMFGKL (203 aa)) constitute a VWFA domain. The Mg(2+) site is built by Ser10, Ser12, and Thr86. Lys418 carries the post-translational modification N6-acetyllysine.

Belongs to the Integrator subunit 14 family. In terms of assembly, component of the Integrator complex, composed of core subunits INTS1, INTS2, INTS3, INTS4, INTS5, INTS6, INTS7, INTS8, INTS9/RC74, INTS10, INTS11/CPSF3L, INTS12, INTS13, INTS14 and INTS15. The core complex associates with protein phosphatase 2A subunits PPP2CA and PPP2R1A, to form the Integrator-PP2A (INTAC) complex. INTS14 is part of the tail subcomplex, composed of INTS10, INTS13, INTS14 and INTS15.

It localises to the nucleus. Its function is as follows. Component of the integrator complex, a multiprotein complex that terminates RNA polymerase II (Pol II) transcription in the promoter-proximal region of genes. The integrator complex provides a quality checkpoint during transcription elongation by driving premature transcription termination of transcripts that are unfavorably configured for transcriptional elongation: the complex terminates transcription by (1) catalyzing dephosphorylation of the C-terminal domain (CTD) of Pol II subunit POLR2A/RPB1 and SUPT5H/SPT5, (2) degrading the exiting nascent RNA transcript via endonuclease activity and (3) promoting the release of Pol II from bound DNA. The integrator complex is also involved in terminating the synthesis of non-coding Pol II transcripts, such as enhancer RNAs (eRNAs), small nuclear RNAs (snRNAs), telomerase RNAs and long non-coding RNAs (lncRNAs). Within the integrator complex, INTS14 is part of the integrator tail module that acts as a platform for the recruitment of transcription factors at promoters. This chain is Integrator complex subunit 14, found in Mus musculus (Mouse).